The sequence spans 357 residues: Protein RecA (357 aa).

78–85 provides a ligand contact to ATP; sequence GPESSGKT.

The protein belongs to the RecA family.

The protein localises to the cytoplasm. In terms of biological role, can catalyze the hydrolysis of ATP in the presence of single-stranded DNA, the ATP-dependent uptake of single-stranded DNA by duplex DNA, and the ATP-dependent hybridization of homologous single-stranded DNAs. It interacts with LexA causing its activation and leading to its autocatalytic cleavage. The sequence is that of Protein RecA from Cereibacter sphaeroides (strain ATCC 17029 / ATH 2.4.9) (Rhodobacter sphaeroides).